The following is a 165-amino-acid chain: Endoribonuclease YbeY (165 aa).

Zn(2+) contacts are provided by His130, His134, and His140.

This sequence belongs to the endoribonuclease YbeY family. It depends on Zn(2+) as a cofactor.

It is found in the cytoplasm. Its function is as follows. Single strand-specific metallo-endoribonuclease involved in late-stage 70S ribosome quality control and in maturation of the 3' terminus of the 16S rRNA. The protein is Endoribonuclease YbeY of Streptococcus suis (strain 98HAH33).